The sequence spans 469 residues: UDP-N-acetylmuramate--L-alanine ligase (469 aa).

Position 113-119 (113-119 (GAHGKTT)) interacts with ATP.

This sequence belongs to the MurCDEF family.

The protein localises to the cytoplasm. The catalysed reaction is UDP-N-acetyl-alpha-D-muramate + L-alanine + ATP = UDP-N-acetyl-alpha-D-muramoyl-L-alanine + ADP + phosphate + H(+). Its pathway is cell wall biogenesis; peptidoglycan biosynthesis. Functionally, cell wall formation. The sequence is that of UDP-N-acetylmuramate--L-alanine ligase from Syntrophobacter fumaroxidans (strain DSM 10017 / MPOB).